The primary structure comprises 293 residues: MVNLTIKREKKKIPRAFVVGTPIHHSKSPKIHNFWLKQYDLQGEYLAQEVTSEEFRDFLTSLKRRGFCGGNVTLPHKQEAFHLANYKDDVATMIGAVNTLWYEGDKLCGTNSDAYGFSANLDDSAPDWMGETALVFGAGGAARAILYALKKRGFERICLVNRTKQRAESLAEHFGKPVEVCDWYKAHEILYQADLIVNTTSVGMINSNEKESTSFFCDFHKTKTTALVTDIVYTPLVTPFLQRAKAHGLRTVDGLGMLLHQAVLGFERWFGIRPRVTKALRATILQDMGEKRG.

Shikimate contacts are provided by residues 26–28 and threonine 73; that span reads SKS. Lysine 77 serves as the catalytic Proton acceptor. Aspartate 89 contributes to the NADP(+) binding site. The shikimate site is built by asparagine 98 and aspartate 113. Residues 137-141, 161-166, and isoleucine 231 contribute to the NADP(+) site; these read GAGGA and NRTKQR. Tyrosine 233 is a binding site for shikimate. Residue glycine 254 coordinates NADP(+).

This sequence belongs to the shikimate dehydrogenase family. In terms of assembly, homodimer.

The enzyme catalyses shikimate + NADP(+) = 3-dehydroshikimate + NADPH + H(+). It functions in the pathway metabolic intermediate biosynthesis; chorismate biosynthesis; chorismate from D-erythrose 4-phosphate and phosphoenolpyruvate: step 4/7. Involved in the biosynthesis of the chorismate, which leads to the biosynthesis of aromatic amino acids. Catalyzes the reversible NADPH linked reduction of 3-dehydroshikimate (DHSA) to yield shikimate (SA). The polypeptide is Shikimate dehydrogenase (NADP(+)) (Bartonella henselae (strain ATCC 49882 / DSM 28221 / CCUG 30454 / Houston 1) (Rochalimaea henselae)).